A 97-amino-acid chain; its full sequence is Putative membrane protein insertion efficiency factor (97 aa).

The protein belongs to the UPF0161 family.

It localises to the cell membrane. Could be involved in insertion of integral membrane proteins into the membrane. The sequence is that of Putative membrane protein insertion efficiency factor from Lactobacillus helveticus (strain DPC 4571).